Here is a 119-residue protein sequence, read N- to C-terminus: Basic phospholipase A2 taipoxin alpha chain (119 aa).

Intrachain disulfides connect C11/C72, C27/C118, C29/C45, C44/C99, C51/C92, C61/C85, and C79/C90. Ca(2+) contacts are provided by Y28, G30, and G32. H48 is an active-site residue. D49 is a Ca(2+) binding site. D93 is a catalytic residue.

It belongs to the phospholipase A2 family. Group I subfamily. D49 sub-subfamily. Heterotrimer of alpha, beta, and gamma chains; non-covalently linked. It depends on Ca(2+) as a cofactor. Expressed by the venom gland.

It is found in the secreted. It carries out the reaction a 1,2-diacyl-sn-glycero-3-phosphocholine + H2O = a 1-acyl-sn-glycero-3-phosphocholine + a fatty acid + H(+). Its function is as follows. Heterotrimer: Snake venom phospholipase A2 (PLA2) heterotrimer that acts as a potent presynaptic neurotoxin by blocking synaptic transmission and synaptic vesicle recycling. May act by binding in a calcium-dependent fashion to neurotonal pentraxin-1 (NPTX1) and neurotonal pentraxin-2 (NPTX2), but not to neuronal pentraxin receptor (NPTXR). Also binds to taipoxin-associated calcium binding protein 49 (RCN2), a protein localized in the lumen of endoplasmic reticulum. In terms of biological role, monomer (alpha chain): Snake venom phospholipase A2 (PLA2) alpha chain that possesses the same high enzymatic activity as the heterotrimer. PLA2 catalyzes the calcium-dependent hydrolysis of the 2-acyl groups in 3-sn-phosphoglycerides. This chain is Basic phospholipase A2 taipoxin alpha chain, found in Oxyuranus scutellatus scutellatus (Australian taipan).